The following is a 129-amino-acid chain: Prefoldin subunit alpha (129 aa).

Belongs to the prefoldin alpha subunit family. As to quaternary structure, heterohexamer of two alpha and four beta subunits.

The protein resides in the cytoplasm. Molecular chaperone capable of stabilizing a range of proteins. Seems to fulfill an ATP-independent, HSP70-like function in archaeal de novo protein folding. The chain is Prefoldin subunit alpha from Thermofilum pendens (strain DSM 2475 / Hrk 5).